Here is a 549-residue protein sequence, read N- to C-terminus: S-methyl thiourocanate hydratase (549 aa).

11 residues coordinate NAD(+): M49, G173, M174, G175, D193, S198, N239, A240, Q260, V270, and Y318.

Belongs to the urocanase family. S-methyl thiourocanate hydratase subfamily. It depends on NAD(+) as a cofactor.

It carries out the reaction S-methyl-(E)-thiourocanate + H2O = S-methyl-thiohydantoin-5-propanoate. Its function is as follows. Hydratase involved in the catabolism of S-methyl ergothioneine. Catalyzes the 1,4-addition of H(2)O to S-methyl thiourocanate, leading to the formation of S-methyl-thiohydantoin-5-propanoate, the second step in S-methyl ergothioneine degradation. Cannot use urocanate or thiourocanate as substrate. The chain is S-methyl thiourocanate hydratase from Variovorax sp. (strain JCM 16519 / RA8).